The chain runs to 588 residues: Phomenoic acid biosynthesis cluster cytochrome P450 monooxygenase (588 aa).

An N-terminal signal peptide occupies residues 1–21; sequence MSFARIFITILLLFILRRAFK. The N-linked (GlcNAc...) asparagine glycan is linked to Asn-293. Positions 467 to 486 are enriched in basic and acidic residues; it reads HQSDPDRFKPSPDAPDEKLF. The disordered stretch occupies residues 467–490; that stretch reads HQSDPDRFKPSPDAPDEKLFRPSR. Cys-519 contributes to the heme binding site.

Belongs to the cytochrome P450 family. Heme serves as cofactor.

It participates in secondary metabolite biosynthesis. Cytochrome P450 monooxygenase; part of the gene cluster that mediates the biosynthesis of phomenoic acid, a long chain aliphatic carboxylic acid that does not appear to be essential for pathogenicity but may play a role in allowing to outcompete other fungi in the environmental niche via its antifungal properties. The polyketide synthase produces the long methylated aliphatic carboxylic acid chain of phomenoic acid. The cluster-specific cytochrome P450 monooxygenase may then hydroxylate the methyl group of carbon 31. The putative dehydrogenase YogA, which has no obvious role in phomenoic acid biosynthesis, may further modify phomenoic acid to produce a compound not identified yet. This chain is Phomenoic acid biosynthesis cluster cytochrome P450 monooxygenase, found in Leptosphaeria maculans (strain JN3 / isolate v23.1.3 / race Av1-4-5-6-7-8) (Blackleg fungus).